The chain runs to 165 residues: Cytochrome b6-f complex subunit 4 (165 aa).

The next 3 membrane-spanning stretches (helical) occupy residues 36–56 (LLYI…GLAV), 95–115 (LLGV…PFLE), and 131–151 (TVFL…TLPI).

The protein belongs to the cytochrome b family. PetD subfamily. The 4 large subunits of the cytochrome b6-f complex are cytochrome b6, subunit IV (17 kDa polypeptide, petD), cytochrome f and the Rieske protein, while the 4 small subunits are petG, petL, petM and petN. The complex functions as a dimer.

The protein resides in the plastid. It localises to the chloroplast thylakoid membrane. Component of the cytochrome b6-f complex, which mediates electron transfer between photosystem II (PSII) and photosystem I (PSI), cyclic electron flow around PSI, and state transitions. The sequence is that of Cytochrome b6-f complex subunit 4 from Populus alba (White poplar).